The chain runs to 346 residues: Uroporphyrinogen decarboxylase (346 aa).

Substrate is bound by residues 26-30 (RQAGR), Phe45, Asp76, Tyr153, Ser208, and His323.

This sequence belongs to the uroporphyrinogen decarboxylase family. Homodimer.

It is found in the cytoplasm. It catalyses the reaction uroporphyrinogen III + 4 H(+) = coproporphyrinogen III + 4 CO2. Its pathway is porphyrin-containing compound metabolism; protoporphyrin-IX biosynthesis; coproporphyrinogen-III from 5-aminolevulinate: step 4/4. Its function is as follows. Catalyzes the decarboxylation of four acetate groups of uroporphyrinogen-III to yield coproporphyrinogen-III. This Prochlorococcus marinus subsp. pastoris (strain CCMP1986 / NIES-2087 / MED4) protein is Uroporphyrinogen decarboxylase.